A 262-amino-acid polypeptide reads, in one-letter code: Ribose-5-phosphate isomerase A (262 aa).

Substrate is bound by residues 33-36, 89-92, and 102-105; these read TGST, DGAD, and KGGG. Glu-111 serves as the catalytic Proton acceptor. Residue Lys-129 participates in substrate binding.

Belongs to the ribose 5-phosphate isomerase family. In terms of assembly, homodimer.

It catalyses the reaction aldehydo-D-ribose 5-phosphate = D-ribulose 5-phosphate. It participates in carbohydrate degradation; pentose phosphate pathway; D-ribose 5-phosphate from D-ribulose 5-phosphate (non-oxidative stage): step 1/1. Functionally, catalyzes the reversible conversion of ribose-5-phosphate to ribulose 5-phosphate. The polypeptide is Ribose-5-phosphate isomerase A (Cereibacter sphaeroides (strain ATCC 17023 / DSM 158 / JCM 6121 / CCUG 31486 / LMG 2827 / NBRC 12203 / NCIMB 8253 / ATH 2.4.1.) (Rhodobacter sphaeroides)).